The sequence spans 362 residues: Mannose-1-phosphate guanyltransferase (362 aa).

This sequence belongs to the transferase hexapeptide repeat family.

It localises to the cytoplasm. It carries out the reaction alpha-D-mannose 1-phosphate + GTP + H(+) = GDP-alpha-D-mannose + diphosphate. The protein operates within nucleotide-sugar biosynthesis; GDP-alpha-D-mannose biosynthesis; GDP-alpha-D-mannose from alpha-D-mannose 1-phosphate (GTP route): step 1/1. Involved in cell wall synthesis where it is required for glycosylation. Involved in cell cycle progression through cell-size checkpoint. The sequence is that of Mannose-1-phosphate guanyltransferase (MPG1) from Debaryomyces hansenii (strain ATCC 36239 / CBS 767 / BCRC 21394 / JCM 1990 / NBRC 0083 / IGC 2968) (Yeast).